Here is a 1715-residue protein sequence, read N- to C-terminus: Ubiquitin carboxyl-terminal hydrolase 32 (1715 aa).

EF-hand domains follow at residues 161-196 and 197-232; these read IPKN…ACRG and PGVE…LLLV. The Ca(2+) site is built by D174, N176, D178, H180, E185, D210, D212, D214, and E221. The DUSP domain maps to 314–492; the sequence is QCKHMENDIV…DNLPLPRQVI (179 aa). The tract at residues 393–429 is disordered; sequence QHDSYSLGSGTGSASGSGSASSGISAGRHCGPVRPGP. The segment covering 408–419 has biased composition (low complexity); the sequence is GSGSASSGISAG. The USP domain maps to 677 to 1675; it reads TGLHNLGNTC…AAYLLFYERK (999 aa). C686 acts as the Nucleophile in catalysis. 2 stretches are compositionally biased toward polar residues: residues 1103–1126 and 1150–1164; these read TESN…SSLT and YRTS…STGH. Disordered regions lie at residues 1103–1213 and 1536–1569; these read TESN…PHKA and DEID…GNIL. The span at 1171–1180 shows a compositional bias: acidic residues; that stretch reads DVDEQAEEGN. The span at 1188 to 1209 shows a compositional bias: polar residues; it reads DQITTSQPETSSGVYSRRSSQP. Residues 1540-1549 are compositionally biased toward basic and acidic residues; sequence APSKEVKEEL. Residues 1550-1559 show a composition bias toward polar residues; sequence PNQTGSTKAT. Residue H1633 is the Proton acceptor of the active site.

This sequence belongs to the peptidase C19 family. USP20/USP33 subfamily.

The catalysed reaction is Thiol-dependent hydrolysis of ester, thioester, amide, peptide and isopeptide bonds formed by the C-terminal Gly of ubiquitin (a 76-residue protein attached to proteins as an intracellular targeting signal).. Functionally, deubiquitinating enzyme that acts as an inhibitor of mitophagy probably by counteracting the action of park. Possibly functions by hydrolyzing ubiquitin attached by park on target proteins, thereby reducing park's ability to drive mitophagy. The chain is Ubiquitin carboxyl-terminal hydrolase 32 from Drosophila melanogaster (Fruit fly).